We begin with the raw amino-acid sequence, 338 residues long: Phenylalanine--tRNA ligase alpha subunit (338 aa).

Position 252 (Glu-252) interacts with Mg(2+).

It belongs to the class-II aminoacyl-tRNA synthetase family. Phe-tRNA synthetase alpha subunit type 1 subfamily. Tetramer of two alpha and two beta subunits. Mg(2+) is required as a cofactor.

The protein localises to the cytoplasm. It carries out the reaction tRNA(Phe) + L-phenylalanine + ATP = L-phenylalanyl-tRNA(Phe) + AMP + diphosphate + H(+). This is Phenylalanine--tRNA ligase alpha subunit from Pseudomonas entomophila (strain L48).